Consider the following 240-residue polypeptide: NKG2-E type II integral membrane protein (240 aa).

Positions 1–12 (MSKQRGTFSEVS) are enriched in polar residues. The interval 1 to 31 (MSKQRGTFSEVSLAQDPKWQQRKPKGNKSSI) is disordered. Residues 1 to 70 (MSKQRGTFSE…CQGLLPPPEK (70 aa)) are Cytoplasmic-facing. A helical; Signal-anchor for type II membrane protein membrane pass occupies residues 71–93 (LTAEVLGIICIVLMATVLKTIVL). Over 94–240 (IPFLEQNNSS…IMLTRLVLNS (147 aa)) the chain is Extracellular. Residue Asn-100 is glycosylated (N-linked (GlcNAc...) asparagine). Residues 116–230 (HCPEEWITYS…GSSRIIRRGF (115 aa)) enclose the C-type lectin domain. An intrachain disulfide couples Cys-117 to Cys-128. 2 N-linked (GlcNAc...) asparagine glycosylation sites follow: Asn-149 and Asn-179. Cys-207 and Cys-220 are joined by a disulfide.

Can form disulfide-bonded heterodimer with CD94. Natural killer cells.

The protein resides in the membrane. Its function is as follows. Plays a role as a receptor for the recognition of MHC class I HLA-E molecules by NK cells and some cytotoxic T-cells. In Homo sapiens (Human), this protein is NKG2-E type II integral membrane protein (KLRC3).